The following is a 205-amino-acid chain: Adenylate kinase (205 aa).

10–15 (GAGKGT) is an ATP binding site. An NMP region spans residues 30-59 (STGDMLRAAVAQGSEVGKVAEGIMARGELV). Residues Thr-31, Arg-36, 57–59 (ELV), 85–88 (GFPR), and Gln-92 contribute to the AMP site. Residues 126-139 (TRAAETAGGPRADD) form an LID region. Arg-127 is a binding site for ATP. Residues Arg-136 and Arg-147 each contribute to the AMP site. Lys-175 provides a ligand contact to ATP.

This sequence belongs to the adenylate kinase family. Monomer.

It is found in the cytoplasm. It carries out the reaction AMP + ATP = 2 ADP. It functions in the pathway purine metabolism; AMP biosynthesis via salvage pathway; AMP from ADP: step 1/1. Catalyzes the reversible transfer of the terminal phosphate group between ATP and AMP. Plays an important role in cellular energy homeostasis and in adenine nucleotide metabolism. The chain is Adenylate kinase from Parvibaculum lavamentivorans (strain DS-1 / DSM 13023 / NCIMB 13966).